The sequence spans 248 residues: Probable 2-oxo-3-(5-oxofuran-2-ylidene)propanoate lactonase (248 aa).

Residues Cys-123, Asp-180, and His-212 contribute to the active site.

This sequence belongs to the dienelactone hydrolase family.

It catalyses the reaction 2-oxo-3-(5-oxofuran-2-ylidene)propanoate + H2O = 3-maleylpyruvate + H(+). Functionally, involved in the 5-nitroanthranilic acid (5NAA) degradation. Catalyzes the hydrolysis of the lactone to produce maleylpyruvate biodegradation of 5-nitroanthranilate. The sequence is that of Probable 2-oxo-3-(5-oxofuran-2-ylidene)propanoate lactonase (naaC) from Bradyrhizobium sp.